We begin with the raw amino-acid sequence, 108 residues long: Abdominal ganglion neuropeptide R3-14 (108 aa).

A signal peptide spans 1–23 (MQVLHLCLAVSIAVALLSQAAWS). Pyrrolidone carboxylic acid (Glu); partial is present on residues glutamate 24 and glutamate 52. At glutamine 66 the chain carries Pyrrolidone carboxylic acid.

The partial formation of pyroglutamate from N-terminal glutamic acid in peptides isolated from single cells is detected by mass spectrometry. There are indications this modification depends on a heat sensitive factor. As to expression, neurons R3-R14. A cluster of 12 giant neurons located on the right side of the abdominal ganglion.

The protein localises to the secreted. In terms of biological role, HRBP is a myoactive peptide that excites Aplysia heart and enhances gut motility in vitro. In Aplysia californica (California sea hare), this protein is Abdominal ganglion neuropeptide R3-14.